The following is a 424-amino-acid chain: Histidine--tRNA ligase (424 aa).

The protein belongs to the class-II aminoacyl-tRNA synthetase family. As to quaternary structure, homodimer.

The protein localises to the cytoplasm. The enzyme catalyses tRNA(His) + L-histidine + ATP = L-histidyl-tRNA(His) + AMP + diphosphate + H(+). This chain is Histidine--tRNA ligase, found in Escherichia coli (strain SE11).